The primary structure comprises 124 residues: Protein archease (124 aa).

Histidine 7, aspartate 10, aspartate 123, and threonine 124 together coordinate Ca(2+).

This sequence belongs to the archease family.

Functionally, activates the tRNA-splicing ligase complex by facilitating the enzymatic turnover of catalytic subunit RtcB. Acts by promoting the guanylylation of RtcB, a key intermediate step in tRNA ligation. Can also alter the NTP specificity of RtcB such that ATP, dGTP or ITP is used efficiently. May also act as a chaperone or modulator of proteins involved in DNA or RNA processing. The protein is Protein archease of Thermotoga maritima (strain ATCC 43589 / DSM 3109 / JCM 10099 / NBRC 100826 / MSB8).